The sequence spans 408 residues: Succinylornithine transaminase (408 aa).

Lys-252 bears the N6-(pyridoxal phosphate)lysine mark.

Belongs to the class-III pyridoxal-phosphate-dependent aminotransferase family. AstC subfamily. It depends on pyridoxal 5'-phosphate as a cofactor.

The catalysed reaction is N(2)-succinyl-L-ornithine + 2-oxoglutarate = N-succinyl-L-glutamate 5-semialdehyde + L-glutamate. The protein operates within amino-acid degradation; L-arginine degradation via AST pathway; L-glutamate and succinate from L-arginine: step 3/5. Functionally, catalyzes the transamination of N(2)-succinylornithine and alpha-ketoglutarate into N(2)-succinylglutamate semialdehyde and glutamate. Can also act as an acetylornithine aminotransferase. The sequence is that of Succinylornithine transaminase from Salmonella typhi.